A 358-amino-acid polypeptide reads, in one-letter code: MAVNQEKEKAIELAMSAVERQFGKGSIMRLGNDEPMMRDVQAIPTGSISLDIALGVGGVPKGRIIEIFGPESSGKTTLCLHIVAEAQKRGGICGYVDAEHALDVGYARKLGVRTDDLLLSQPDTGEQALEIAEMLVRSGAIDVLVVDSVAALVPKAELEGEMGDAHMGVQARLMSQALRKLTGTIAKSQTCVIFINQIRMKIGVMFGNPETTTGGNALKFYASQRLDIRRIGAIKNGDNVVGSRTRVKVVKNKVAPPFKEVEFDIMYGTGISREGDLIDLASNENIVEKSGSWFSFNGERIGQGRENVKEYLREHPEIAKDIEGRVLEKYGIGKSGAPSPRRRTSPRRPKVAARSAAV.

Position 69–76 (69–76 (GPESSGKT)) interacts with ATP. Residues 331–358 (GIGKSGAPSPRRRTSPRRPKVAARSAAV) are disordered. Residues 340–351 (PRRRTSPRRPKV) show a composition bias toward basic residues.

Belongs to the RecA family.

The protein resides in the cytoplasm. In terms of biological role, can catalyze the hydrolysis of ATP in the presence of single-stranded DNA, the ATP-dependent uptake of single-stranded DNA by duplex DNA, and the ATP-dependent hybridization of homologous single-stranded DNAs. It interacts with LexA causing its activation and leading to its autocatalytic cleavage. This Myxococcus xanthus protein is Protein RecA 2.